We begin with the raw amino-acid sequence, 380 residues long: Succinate--CoA ligase [ADP-forming] subunit beta (380 aa).

The 229-residue stretch at 9-237 folds into the ATP-grasp domain; sequence RDLLARFGIP…PSAEPEAERR (229 aa). ATP is bound by residues lysine 45, 52–54, valine 94, and glutamate 99; that span reads GRG. Mg(2+) contacts are provided by asparagine 192 and aspartate 206. Residues asparagine 257 and 314–316 contribute to the substrate site; that span reads GIT.

Belongs to the succinate/malate CoA ligase beta subunit family. In terms of assembly, heterotetramer of two alpha and two beta subunits. The cofactor is Mg(2+).

It catalyses the reaction succinate + ATP + CoA = succinyl-CoA + ADP + phosphate. The enzyme catalyses GTP + succinate + CoA = succinyl-CoA + GDP + phosphate. Its pathway is carbohydrate metabolism; tricarboxylic acid cycle; succinate from succinyl-CoA (ligase route): step 1/1. Succinyl-CoA synthetase functions in the citric acid cycle (TCA), coupling the hydrolysis of succinyl-CoA to the synthesis of either ATP or GTP and thus represents the only step of substrate-level phosphorylation in the TCA. The beta subunit provides nucleotide specificity of the enzyme and binds the substrate succinate, while the binding sites for coenzyme A and phosphate are found in the alpha subunit. The chain is Succinate--CoA ligase [ADP-forming] subunit beta from Chloroflexus aurantiacus (strain ATCC 29366 / DSM 635 / J-10-fl).